We begin with the raw amino-acid sequence, 217 residues long: ATP-dependent Clp protease proteolytic subunit (217 aa).

The Nucleophile role is filled by serine 121. Residue histidine 146 is part of the active site.

This sequence belongs to the peptidase S14 family. As to quaternary structure, fourteen ClpP subunits assemble into 2 heptameric rings which stack back to back to give a disk-like structure with a central cavity, resembling the structure of eukaryotic proteasomes.

The protein resides in the cytoplasm. The catalysed reaction is Hydrolysis of proteins to small peptides in the presence of ATP and magnesium. alpha-casein is the usual test substrate. In the absence of ATP, only oligopeptides shorter than five residues are hydrolyzed (such as succinyl-Leu-Tyr-|-NHMec, and Leu-Tyr-Leu-|-Tyr-Trp, in which cleavage of the -Tyr-|-Leu- and -Tyr-|-Trp bonds also occurs).. Functionally, cleaves peptides in various proteins in a process that requires ATP hydrolysis. Has a chymotrypsin-like activity. Plays a major role in the degradation of misfolded proteins. In Burkholderia lata (strain ATCC 17760 / DSM 23089 / LMG 22485 / NCIMB 9086 / R18194 / 383), this protein is ATP-dependent Clp protease proteolytic subunit.